The sequence spans 298 residues: Esterase Rv0045c (298 aa).

The Nucleophile role is filled by Ser122. Residues Asp146 and His277 contribute to the active site.

Belongs to the AB hydrolase superfamily. As to quaternary structure, monomer.

It catalyses the reaction a carboxylic ester + H2O = an alcohol + a carboxylate + H(+). It carries out the reaction a butanoate ester + H2O = an aliphatic alcohol + butanoate + H(+). The enzyme catalyses an acetyl ester + H2O = an aliphatic alcohol + acetate + H(+). The catalysed reaction is a hexanoate ester + H2O = an aliphatic alcohol + hexanoate + H(+). It catalyses the reaction a tetradecanoate ester + H2O = an aliphatic alcohol + tetradecanoate + H(+). Its activity is regulated as follows. Hydrolysis of a fluorogenic ester substrate (MOAME) is allosterically inhibited by divalent transition metal cations (Cu(2+), Zn(2+), Ni(2+) and Co(2+)). Inhibition is largely due to a two order of magnitude drop in kcat, with relatively little change in KM. The thermal stability decreases with increasing concentrations of Ni(2+). Its function is as follows. Esterase likely involved in ester/lipid metabolism. Shows strong substrate selectivity toward short, straight chain alkyl esters with the highest activity toward four atom chains. The physiological substrate is unknown. Is able to hydrolyze ester bonds within a wide range of p-nitrophenyl derivatives (C2-C14) in vitro. The protein is Esterase Rv0045c of Mycobacterium tuberculosis (strain ATCC 25618 / H37Rv).